Consider the following 763-residue polypeptide: Amine oxidase [copper-containing] 3 (763 aa).

Residues 1–5 lie on the Cytoplasmic side of the membrane; sequence MNQKT. Residues 6-26 traverse the membrane as a helical; Signal-anchor for type II membrane protein segment; the sequence is ILVLLILAVITIFALVCVLLV. Over 27–763 the chain is Extracellular; it reads GRGGDGGEPS…AFSHGGFSHN (737 aa). O-linked (GalNAc...) serine glycosylation is present at S43. Residue N137 is glycosylated (N-linked (GlcNAc...) asparagine). Residues C198 and C199 are joined by a disulfide bond. T212 carries an O-linked (GalNAc...) threonine glycan. N-linked (GlcNAc...) asparagine glycosylation is found at N232 and N294. The active-site Proton acceptor is D386. C404 and C430 are joined by a disulfide. Y471 serves as the catalytic Schiff-base intermediate with substrate; via topaquinone. 2',4',5'-topaquinone is present on Y471. Cu(2+) contacts are provided by H520 and H522. Positions 529, 530, 531, and 572 each coordinate Ca(2+). A glycan (N-linked (GlcNAc...) (complex) asparagine) is linked at N592. A glycan (N-linked (GlcNAc...) asparagine) is linked at N618. Ca(2+) contacts are provided by E641, F663, and N665. An N-linked (GlcNAc...) asparagine glycan is attached at N666. 3 residues coordinate Ca(2+): E667, D673, and L674. A glycan (O-linked (GlcNAc) threonine) is linked at T679. Residue H684 coordinates Cu(2+). Residues C734 and C741 are joined by a disulfide bond.

It belongs to the copper/topaquinone oxidase family. In terms of assembly, homodimer; disulfide-linked. Can heterodimerize with isoform 2 leading to reduced surface expression. Probably forms heterodimers with AOC2. Cu(2+) serves as cofactor. Ca(2+) is required as a cofactor. The cofactor is L-topaquinone. Topaquinone (TPQ) is generated by copper-dependent autoxidation of a specific tyrosyl residue. Post-translationally, N- and O-glycosylated. In terms of tissue distribution, strongly expressed on the high endothelial venules of peripheral lymph nodes and on hepatic endothelia. Also highly expressed in appendix, lung and small intestine. Expressed also in adipose tissue, in bone marrow, colon, heart, kidney, ovary, pancreas, placenta, prostate, skeletal muscle, spleen and testis. Isoform 2 seems to be the predominant transcript in fetal kidneys, fetal cartilage and fetal tonsils. The highest relative expression of isoform 2 occurs in skeletal muscle, heart, pancreas, kidney, and lung.

Its subcellular location is the cell membrane. It carries out the reaction methylamine + O2 + H2O = formaldehyde + H2O2 + NH4(+). It catalyses the reaction benzylamine + O2 + H2O = benzaldehyde + H2O2 + NH4(+). The enzyme catalyses 2-phenylethylamine + O2 + H2O = 2-phenylacetaldehyde + H2O2 + NH4(+). Catalyzes the oxidative deamination of primary amines to the corresponding aldehydes with the concomitant production of hydrogen peroxide and ammonia. Has a preference for the primary monoamines methylamine and benzylamine. Could also act on 2-phenylethylamine but much less efficiently. At endothelial cells surface can also function as a cell adhesion protein that participates in lymphocyte extravasation and recirculation by mediating the binding of lymphocytes to peripheral lymph node vascular endothelial cells in an L-selectin-independent fashion. In terms of biological role, has no semicarbazide-sensitive amine oxidase (SSAO) activity. This is Amine oxidase [copper-containing] 3 from Homo sapiens (Human).